The sequence spans 111 residues: MISTVSLFWALCVVCVINMARYYSSLRALLVVLRGCDPLLYQYVDGGGFFTSHGQPSKQVRLIGYIWAQRYLDHHDDEFIRRCQRVRGQFILTSALCGLVAIGLIGLAIWH.

The next 2 membrane-spanning stretches (helical) occupy residues 1–21 and 90–110; these read MIST…NMAR and FILT…LAIW.

Belongs to the universal stress protein B family.

It is found in the cell inner membrane. The sequence is that of Universal stress protein B from Erwinia tasmaniensis (strain DSM 17950 / CFBP 7177 / CIP 109463 / NCPPB 4357 / Et1/99).